The following is a 231-amino-acid chain: Urease accessory protein UreE (231 aa).

The disordered stretch occupies residues valine 185–histidine 231. The span at histidine 203 to histidine 231 shows a compositional bias: basic and acidic residues.

Belongs to the UreE family.

It is found in the cytoplasm. Involved in urease metallocenter assembly. Binds nickel. Probably functions as a nickel donor during metallocenter assembly. This chain is Urease accessory protein UreE, found in Yersinia pestis bv. Antiqua (strain Antiqua).